A 1118-amino-acid chain; its full sequence is Cytospin-A (1118 aa).

Disordered stretches follow at residues 1-63 (MKKA…AGMA), 75-176 (KKST…NQIS), 294-324 (SLSP…GSVE), and 359-391 (SSDD…NASE). The span at 80–90 (SSAAPSAPAPA) shows a compositional bias: low complexity. The span at 93-117 (ISENKSKISTGTSSSAKRSTSAGNK) shows a compositional bias: polar residues. A compositionally biased stretch (basic and acidic residues) spans 120 to 131 (SSTRERLRERTR). Residues 133 to 145 (NQSKKLPSVSQGA) are compositionally biased toward polar residues. A compositionally biased stretch (basic and acidic residues) spans 158–171 (TAAEGDIRMSKSKS). Residues 168–281 (KSKSDNQISD…LNALGFSLEQ (114 aa)) are a coiled coil. Polar residues predominate over residues 294–304 (SLSPEITPGNQ). The span at 359–373 (SSDDALDAPSSSESE) shows a compositional bias: low complexity. A phosphoserine mark is found at Ser385, Ser386, and Ser390. 2 coiled-coil regions span residues 395–450 (ACLT…MESL) and 488–808 (RYME…RGRV). 3 positions are modified to phosphoserine: Ser869, Ser882, and Ser888. Residues 921–999 (TSSTSRPASL…STRSRIREER (79 aa)) are disordered. The span at 947-957 (RSSEEMKRDIS) shows a compositional bias: basic and acidic residues. The segment covering 972–992 (TTSPQLSLSSSPTASVTPSTR) has biased composition (low complexity). The Calponin-homology (CH) domain maps to 1012-1117 (GSKRNALLKW…YVTAIYKYFE (106 aa)).

Belongs to the cytospin-A family. May interact with both microtubules and actin cytoskeleton.

It is found in the cytoplasm. The protein resides in the cytoskeleton. The protein localises to the spindle. Its subcellular location is the cell junction. It localises to the gap junction. Functionally, involved in cytokinesis and spindle organization. May play a role in actin cytoskeleton organization and microtubule stabilization and hence required for proper cell adhesion and migration. This Mus musculus (Mouse) protein is Cytospin-A (Specc1l).